We begin with the raw amino-acid sequence, 430 residues long: MTASLKAIDGSAELTTLMTDLGRQARAAARTLALAPPEQKNRALEAMERAIRAGADKILAANAEDVADAKAAGTTSAFLDRLTLTPARVEAMAEGIAVVRGIADPVGTVTESWQRPNGMTIERVRVPLGVVAVIFESRPNVAADAGVLCLKSGNAVILRGGSESFRSCRAIHDRLVQGLREAGLPDAAITLVPTRDRAAVGLLLAGLDGSVDVIVPRGGKSLVARVESEARVPVFAHLEGVNHVYVDRSADLEMAKSIVLNAKMRRTGVCGAAETLLIDRAAATTHLAPLVTMLIDSGCEVRGDQTVQQVDPRVKPASDEDWDTEYLDAVIAAKLVDGVDGAIVHIHNHGSHHTDAIVAEDAQAAAKFLGEVDSAIVLHNASTQFADGGEFGFGAEIGIATGKFHARGPVGAEQLTTFKYRIHGSGQTRP.

This sequence belongs to the gamma-glutamyl phosphate reductase family.

It is found in the cytoplasm. The catalysed reaction is L-glutamate 5-semialdehyde + phosphate + NADP(+) = L-glutamyl 5-phosphate + NADPH + H(+). Its pathway is amino-acid biosynthesis; L-proline biosynthesis; L-glutamate 5-semialdehyde from L-glutamate: step 2/2. In terms of biological role, catalyzes the NADPH-dependent reduction of L-glutamate 5-phosphate into L-glutamate 5-semialdehyde and phosphate. The product spontaneously undergoes cyclization to form 1-pyrroline-5-carboxylate. This is Gamma-glutamyl phosphate reductase from Rhodopseudomonas palustris (strain ATCC BAA-98 / CGA009).